We begin with the raw amino-acid sequence, 526 residues long: tRNA (guanine(26)-N(2))-dimethyltransferase (526 aa).

Polar residues predominate over residues 1 to 10 (MTENVNSSGD). A disordered region spans residues 1-20 (MTENVNSSGDSAIKSEDKEE). In terms of domain architecture, Trm1 methyltransferase spans 22 to 441 (TVIQEGQAKV…APMHLLWDIY (420 aa)). S-adenosyl-L-methionine-binding residues include R47, R104, and D122. Zn(2+) is bound by residues C286, C289, C325, and C328. The interval 498 to 526 (KGKNWGPRQKAKGSVNSTKAGFQLTEHKE) is disordered.

The protein belongs to the class I-like SAM-binding methyltransferase superfamily. Trm1 family.

It catalyses the reaction guanosine(26) in tRNA + 2 S-adenosyl-L-methionine = N(2)-dimethylguanosine(26) in tRNA + 2 S-adenosyl-L-homocysteine + 2 H(+). Dimethylates a single guanine residue at position 26 of most tRNAs using S-adenosyl-L-methionine as donor of the methyl groups. The chain is tRNA (guanine(26)-N(2))-dimethyltransferase (trm-1) from Caenorhabditis elegans.